Here is a 1892-residue protein sequence, read N- to C-terminus: Plexin A3 (1892 aa).

The first 20 residues, 1-20 (MRSLWLLVFSFSVLTGTNMA), serve as a signal peptide directing secretion. Residues 21–509 (FPMILSERPE…SDKQVSRLPV (489 aa)) enclose the Sema domain. The Extracellular segment spans residues 21-1240 (FPMILSERPE…IYSDSTLTLP (1220 aa)). N-linked (GlcNAc...) asparagine glycosylation occurs at Asn-68. 9 disulfide bridges follow: Cys-86–Cys-95, Cys-121–Cys-129, Cys-283–Cys-404, Cys-299–Cys-355, Cys-373–Cys-392, Cys-512–Cys-529, Cys-518–Cys-560, Cys-521–Cys-538, and Cys-532–Cys-544. A glycan (N-linked (GlcNAc...) asparagine) is linked at Asn-569. The cysteines at positions 595 and 615 are disulfide-linked. IPT/TIG domains lie at 861 to 955 (PRIT…YSFV), 957 to 1041 (PSFS…YIYT), 1044 to 1143 (PNIS…FTYY), and 1146 to 1232 (PTFE…LHIY). N-linked (GlcNAc...) asparagine glycosylation is present at Asn-1183. Residues 1241 to 1261 (AIIGIGAGGGVLLIAIIAVLI) form a helical membrane-spanning segment. A coiled-coil region spans residues 1262-1315 (AYKRKTRDADRTLKRLQLQMDNLESRVALECKEAFAELQTDIQELTNDMDGVKI). Over 1262 to 1892 (AYKRKTRDAD…QAINLMSGSS (631 aa)) the chain is Cytoplasmic.

Belongs to the plexin family. In terms of tissue distribution, detected in primary motor neurons in the embryonic nervous system.

It localises to the cell membrane. Functionally, coreceptor for class 3 semaphorins. Necessary for signaling by class 3 semaphorins and subsequent remodeling of the cytoskeleton. Plays a role in axon guidance in the developing nervous system. Class 3 semaphorins bind to a complex composed of a neuropilin and a plexin. The plexin modulates the affinity of the complex for specific semaphorins, and its cytoplasmic domain is required for the activation of down-stream signaling events in the cytoplasm. In Danio rerio (Zebrafish), this protein is Plexin A3 (plxna3).